We begin with the raw amino-acid sequence, 625 residues long: Coagulation factor XI (625 aa).

The signal sequence occupies residues 1 to 18 (MTLLYQMVHFALFASVAG). 4 Apple domains span residues 20-103 (CVTT…SKQC), 110-193 (CSKD…LKSC), 200-283 (CIRD…LQHC), and 291-374 (CHSS…LRLC). 17 disulfides stabilise this stretch: C20-C103, C46-C76, C50-C56, C110-C193, C136-C165, C140-C146, C200-C283, C226-C255, C230-C236, C291-C374, C317-C346, C321-C327, C380-C500, C416-C432, C514-C581, C545-C560, and C571-C599. N-linked (GlcNAc...) asparagine glycans are attached at residues N90 and N126. A Peptidase S1 domain is found at 388–623 (IVGGTQSVHG…YVDWILEKTQ (236 aa)). H431 (charge relay system) is an active-site residue. N450 is a glycosylation site (N-linked (GlcNAc...) asparagine). The active-site Charge relay system is the D480. The N-linked (GlcNAc...) asparagine glycan is linked to N491. 547-550 (AGYR) contributes to the heparin binding site. S575 (charge relay system) is an active-site residue.

It belongs to the peptidase S1 family. Plasma kallikrein subfamily. Homodimer; disulfide-linked. After activation the heavy and light chains are also linked by a disulfide bond. Interacts (activated) with F9 (inactive and activated) in calcium-dependent manner. Forms a heterodimer with SERPINA5. Post-translationally, activated by factor XIIa (or XII), which cleaves each polypeptide after Arg-387 into the light chain, which contains the active site, and the heavy chain, which associates with high molecular weight (HMW) kininogen. Activated by F12 (activated); the presence of negatively charged surfaces accelerates activation. Activated by F2 (thrombin); the presence of negatively charged surfaces, such as polyphosphate and dextran sulfate, strongly accelerates activation. Autoactivated; the presence of negatively charged surfaces, such as polyphosphate and dextran sulfate, accelerates autoactivation and autolysis. In terms of processing, N-glycosylated on both chains. N-glycosylated sites mainly consist of nonfucosylated sialylated biantennary (in high abundance) and/or triantennary (in low abundance) complex structures.

The protein localises to the secreted. It carries out the reaction Selective cleavage of Arg-|-Ala and Arg-|-Val bonds in factor IX to form factor IXa.. Inhibited by SERPINA5. Functionally, factor XI triggers the middle phase of the intrinsic pathway of blood coagulation by activating factor IX. This is Coagulation factor XI (F11) from Bos taurus (Bovine).